A 213-amino-acid chain; its full sequence is 3-isopropylmalate dehydratase small subunit (213 aa).

It belongs to the LeuD family. LeuD type 1 subfamily. In terms of assembly, heterodimer of LeuC and LeuD.

It carries out the reaction (2R,3S)-3-isopropylmalate = (2S)-2-isopropylmalate. Its pathway is amino-acid biosynthesis; L-leucine biosynthesis; L-leucine from 3-methyl-2-oxobutanoate: step 2/4. In terms of biological role, catalyzes the isomerization between 2-isopropylmalate and 3-isopropylmalate, via the formation of 2-isopropylmaleate. In Neisseria meningitidis serogroup A / serotype 4A (strain DSM 15465 / Z2491), this protein is 3-isopropylmalate dehydratase small subunit.